Reading from the N-terminus, the 419-residue chain is Indole prenyltransferase tdiB (419 aa).

58 to 59 (PS) is an L-tryptophan binding site. Substrate is bound by residues R81, K165, Y167, R236, K238, Y240, Y330, and Y394.

The protein belongs to the tryptophan dimethylallyltransferase family.

The enzyme catalyses didemethylasterriquinone D + dimethylallyl diphosphate = asterriquinone C1 + diphosphate. It participates in secondary metabolite biosynthesis. Indole prenyltransferase; part of the gene cluster that mediates the biosynthesis of terrequinone A, an antitumor agent. The first step in the biosynthetic pathway for terrequinone A is formation of indole pyruvic acid (IPA) from L-tryptophan by the aminotransferase tdiD. The nonribosomal peptide synthase tdiA then immediately converts unstable IPA to didemethylasterriquinone D (DDAQ D), via condensation of 2 IPA molecules. The symmetric connectivity of the 2 IPA molecules is thought to arise by head-to-tail dual Claisen condensations facilitated by the TE domain. TdiB then catalyzes reverse prenylation by transferring dimethylallyl diphosphate to carbon atom 2' of DDAQ D, to yield asterriquinone C-1. Finally, tdiC and tdiE enzymes robustly convert asterriquinone C-1 to terrequinone A via a transformation involving regular prenylation at carbon atom 5, which requires elimination of the hydroxy group on C-5. The polypeptide is Indole prenyltransferase tdiB (Emericella nidulans (strain FGSC A4 / ATCC 38163 / CBS 112.46 / NRRL 194 / M139) (Aspergillus nidulans)).